The following is a 464-amino-acid chain: GDNF family receptor alpha-2 (464 aa).

The first 21 residues, 1–21 (MILANAFCLFFFLDETLRSLA), serve as a signal peptide directing secretion. Disulfide bonds link cysteine 40–cysteine 93, cysteine 47–cysteine 53, cysteine 63–cysteine 78, cysteine 95–cysteine 105, cysteine 161–cysteine 222, cysteine 168–cysteine 174, cysteine 185–cysteine 200, cysteine 195–cysteine 241, cysteine 224–cysteine 229, cysteine 251–cysteine 323, cysteine 258–cysteine 264, cysteine 275–cysteine 293, cysteine 285–cysteine 347, and cysteine 325–cysteine 335. Residue asparagine 52 is glycosylated (N-linked (GlcNAc...) asparagine). N-linked (GlcNAc...) asparagine glycosylation is present at asparagine 357. A disordered region spans residues 363–392 (MSPKGPTFSATQAPRVEKTPSLPDDLSDST). Low complexity predominate over residues 381–392 (TPSLPDDLSDST). Residue asparagine 413 is glycosylated (N-linked (GlcNAc...) asparagine). Residue serine 443 is the site of GPI-anchor amidated serine attachment. Positions 444 to 464 (CRARLSTALTALPLLMVTLAQ) are cleaved as a propeptide — removed in mature form.

It belongs to the GDNFR family. As to quaternary structure, interacts with NRTN ligand and RET: forms a 2:2:2 ternary complex composed of NRTN ligand, GFRA2 and RET receptor. Also forms a 4:4:4 tetrameric complex composed of 4 copies of NRTN ligand, GFRA2 and RET receptor, which prevents endocytosis of RET. Interacts with SORL1. In terms of tissue distribution, neurons of the superior cervical and dorsal root ganglia, and adult brain and testis. Low level in the substantia nigra, spleen and adrenal gland. Isoform 1, isoform 2 and isoform 3 are all expressed in brain, liver, ileum, spleen, heart and kidney. In brain, isoform 1 is most abundant, isoform 2 slightly less and isoform 3 is lowest. No significant levels of isoform 1, isoform 2 or isoform 3 expression in testis.

Its subcellular location is the cell membrane. Functionally, receptor for neurturin (NRTN), a growth factor that supports the survival of sympathetic neurons. NRTN-binding leads to autophosphorylation and activation of the RET receptor. Also able to mediate GDNF signaling through the RET tyrosine kinase receptor. In terms of biological role, participates in NRTN-induced 'Ser-727' phosphorylation of STAT3. The protein is GDNF family receptor alpha-2 of Mus musculus (Mouse).